Here is a 37-residue protein sequence, read N- to C-terminus: MKVRASVKKICRNCKVVKRKGVIRVLCVEPKHKQRQG.

This sequence belongs to the bacterial ribosomal protein bL36 family.

The chain is Large ribosomal subunit protein bL36 from Colwellia psychrerythraea (strain 34H / ATCC BAA-681) (Vibrio psychroerythus).